Here is a 314-residue protein sequence, read N- to C-terminus: Lipoyl synthase (314 aa).

7 residues coordinate [4Fe-4S] cluster: Cys-40, Cys-45, Cys-51, Cys-67, Cys-71, Cys-74, and Ser-280. Positions 53–269 (SERKTATFMI…KNIALEKGFS (217 aa)) constitute a Radical SAM core domain.

This sequence belongs to the radical SAM superfamily. Lipoyl synthase family. It depends on [4Fe-4S] cluster as a cofactor.

It localises to the cytoplasm. The catalysed reaction is [[Fe-S] cluster scaffold protein carrying a second [4Fe-4S](2+) cluster] + N(6)-octanoyl-L-lysyl-[protein] + 2 oxidized [2Fe-2S]-[ferredoxin] + 2 S-adenosyl-L-methionine + 4 H(+) = [[Fe-S] cluster scaffold protein] + N(6)-[(R)-dihydrolipoyl]-L-lysyl-[protein] + 4 Fe(3+) + 2 hydrogen sulfide + 2 5'-deoxyadenosine + 2 L-methionine + 2 reduced [2Fe-2S]-[ferredoxin]. The protein operates within protein modification; protein lipoylation via endogenous pathway; protein N(6)-(lipoyl)lysine from octanoyl-[acyl-carrier-protein]. Functionally, catalyzes the radical-mediated insertion of two sulfur atoms into the C-6 and C-8 positions of the octanoyl moiety bound to the lipoyl domains of lipoate-dependent enzymes, thereby converting the octanoylated domains into lipoylated derivatives. This chain is Lipoyl synthase, found in Oceanobacillus iheyensis (strain DSM 14371 / CIP 107618 / JCM 11309 / KCTC 3954 / HTE831).